The chain runs to 316 residues: Beta-ketoacyl-[acyl-carrier-protein] synthase III 1 (316 aa).

Active-site residues include cysteine 112 and histidine 243. The segment at 244-248 (QANYR) is ACP-binding. Residue asparagine 273 is part of the active site.

The protein belongs to the thiolase-like superfamily. FabH family. In terms of assembly, homodimer.

The protein resides in the cytoplasm. It carries out the reaction malonyl-[ACP] + acetyl-CoA + H(+) = 3-oxobutanoyl-[ACP] + CO2 + CoA. It participates in lipid metabolism; fatty acid biosynthesis. Its function is as follows. Catalyzes the condensation reaction of fatty acid synthesis by the addition to an acyl acceptor of two carbons from malonyl-ACP. Catalyzes the first condensation reaction which initiates fatty acid synthesis and may therefore play a role in governing the total rate of fatty acid production. Possesses both acetoacetyl-ACP synthase and acetyl transacylase activities. Its substrate specificity determines the biosynthesis of branched-chain and/or straight-chain of fatty acids. The polypeptide is Beta-ketoacyl-[acyl-carrier-protein] synthase III 1 (Vibrio parahaemolyticus serotype O3:K6 (strain RIMD 2210633)).